Reading from the N-terminus, the 289-residue chain is Splicing factor C9orf78 homolog (289 aa).

Basic residues predominate over residues 1 to 12 (MPVVRKIFRRRR). 2 disordered regions span residues 1 to 27 (MPVV…SEEV) and 86 to 109 (GKDK…TNRR). The segment at 5 to 58 (RKIFRRRRGDSESEEDEQDSEEVRLKLEETREVQNLRKRPNGVSAVALLVGEKV) is interaction with SNRNP200. Serine 15 and serine 17 each carry phosphoserine. Tyrosine 147 is subject to Phosphotyrosine. A compositionally biased stretch (basic and acidic residues) spans 232 to 283 (LNAPIRRNKEEPKARPLRVGDTEKPEPERSPPNRKRPANEKATDDYHYEKFK). The segment at 232–289 (LNAPIRRNKEEPKARPLRVGDTEKPEPERSPPNRKRPANEKATDDYHYEKFKKMNRRY) is disordered. Phosphothreonine is present on threonine 253. Serine 261 is subject to Phosphoserine.

The protein belongs to the TLS1 family. Component of the spliceosome. Interacts with SNRNP200; the interaction is direct. Interacts with PRPF8.

The protein resides in the nucleus. It localises to the chromosome. It is found in the centromere. Its function is as follows. Plays a role in pre-mRNA splicing by promoting usage of the upstream 3'-splice site at alternative NAGNAG splice sites; these are sites featuring alternative acceptor motifs separated by only a few nucleotides. May also modulate exon inclusion events. Plays a role in spliceosomal remodeling by displacing WBP4 from SNRNP200 and may act to inhibit SNRNP200 helicase activity. Binds U5 snRNA. Required for proper chromosome segregation. Not required for splicing of shelterin components. In Pongo abelii (Sumatran orangutan), this protein is Splicing factor C9orf78 homolog.